We begin with the raw amino-acid sequence, 337 residues long: MPSLSQIRQANELLEDSHSEIVAAFVGGTSGVGEEAAKRLASCVRKPEIFIVGRNEESAARVLAELRNANPQGSYQFVKVDISLLRNVDRACEAIRHKTQTLDLLFISAGSALVAREDTEEGLEKNLVERYYARMRFTQSLLPLLQASNKSPRVVSVLLGGFEIELETDNLDLTKPRTAIYSTRHAATMTSLSMEHLATVYRSISFVHIYPGMVKTPLLDKGLGRFLARIAWILYWPFSITLEQSGQYNVYMATSAAYPPLSPENQQGAGASLAEGGEICIGSTGKVGAGSYILNYDGANRTNVKLMEGYRVRDYAQHIWTHTLSTFQTVTGSAEPA.

The protein belongs to the NmrA-type oxidoreductase family.

The protein operates within secondary metabolite biosynthesis; terpenoid biosynthesis. In terms of biological role, oxidoreductase; part of the gene cluster that mediates the biosynthesis of anditomin, a fungal meroterpenoid. The first step of the pathway is the synthesis of 3,5-dimethylorsellinic acid (DMOA) by the polyketide synthase andM. DMOA is then converted to the phthalide compound 5,7-dihydroxy-4,6-dimethylphthalide (DHDMP) by the cytochrome P450 monooxygenase andK, which is further prenylated by the prenyltransferase andD to yield farnesyl-DHDMP. Further epoxidation by the FAD-dependent monooxygenase andE leads to epoxyfarnesyl-DHDMP. The next step involves the terpene cyclase andB that converts epoxyfarnesyl-DHDMP into preandiloid A through opening of the epoxide ring followed by the cyclization of the farnesyl moiety. Preandiloid A is in turn oxidized at the C-3 hydroxyl group to yield preandiloid B by the dehydrogenase andC. The dioxygenase andA is solely responsible for the dehydrogenation of preandiloid B leading to the enone preandiloid C, as well as for the intriguing structural rearrangement to generate the bicyclo[2.2.2]octane core, transforming preandiloid C into andiconin. FAD-binding monooxygenase andJ then produces andilesin D which is reduced by dehydrogenase andI to yield andilesin A. Action of acetyltransferase andG followed by a spontaneous acetate elimination leads then to andilesin B, which is in turn substrate of the short chain dehydrogenase andH to yield andilesin C. Finally, the dioxygenase andF catalyzes the transformation of andilesin C to anditomin. This Emericella variicolor (Aspergillus stellatus) protein is Oxidoreductase andH.